The sequence spans 103 residues: ATP synthase subunit c (103 aa).

Helical transmembrane passes span 3 to 23 (FLAL…VSGL), 30 to 50 (SIAG…IGMG), and 74 to 94 (MFIA…LALI).

The protein belongs to the ATPase C chain family. As to quaternary structure, F-type ATPases have 2 components, F(1) - the catalytic core - and F(0) - the membrane proton channel. F(1) has five subunits: alpha(3), beta(3), gamma(1), delta(1), epsilon(1). F(0) has three main subunits: a(1), b(2) and c(10-14). The alpha and beta chains form an alternating ring which encloses part of the gamma chain. F(1) is attached to F(0) by a central stalk formed by the gamma and epsilon chains, while a peripheral stalk is formed by the delta and b chains.

It is found in the cell inner membrane. Its function is as follows. F(1)F(0) ATP synthase produces ATP from ADP in the presence of a proton or sodium gradient. F-type ATPases consist of two structural domains, F(1) containing the extramembraneous catalytic core and F(0) containing the membrane proton channel, linked together by a central stalk and a peripheral stalk. During catalysis, ATP synthesis in the catalytic domain of F(1) is coupled via a rotary mechanism of the central stalk subunits to proton translocation. Functionally, key component of the F(0) channel; it plays a direct role in translocation across the membrane. A homomeric c-ring of between 10-14 subunits forms the central stalk rotor element with the F(1) delta and epsilon subunits. This is ATP synthase subunit c from Helicobacter hepaticus (strain ATCC 51449 / 3B1).